A 205-amino-acid chain; its full sequence is MDIEKTGSRREEEEPIVQKPKLEKGKGKAHVFAPPMNYSRIMEKHKQEKVSMAGWKRGVAIFDFVLRLIAAITAMAAAAKMATTEETLPFFTQFLQFSADYTDLPTLSSFVIVNSIVGGYLTLSLPFSIVCILRPLAVPPRLFLILCDTAMMGLTMVAASASAAIVYLAHNGNSSSNWLPVCQQFGDFCKERVAPWWLPLLQRLF.

Over M1–G58 the chain is Cytoplasmic. A helical membrane pass occupies residues V59–A79. Over K80–S109 the chain is Extracellular. Residues F110–V130 form a helical membrane-spanning segment. Residues C131–D148 lie on the Cytoplasmic side of the membrane. Residues T149–A169 traverse the membrane as a helical segment. Residues H170–F205 are Extracellular-facing. The N-linked (GlcNAc...) asparagine glycan is linked to N173.

The protein belongs to the Casparian strip membrane proteins (CASP) family. As to quaternary structure, homodimer and heterodimers.

The protein resides in the cell membrane. In terms of biological role, regulates membrane-cell wall junctions and localized cell wall deposition. Required for establishment of the Casparian strip membrane domain (CSD) and the subsequent formation of Casparian strips, a cell wall modification of the root endodermis that determines an apoplastic barrier between the intraorganismal apoplasm and the extraorganismal apoplasm and prevents lateral diffusion. The polypeptide is Casparian strip membrane protein 4 (Raphanus sativus (Radish)).